Here is a 73-residue protein sequence, read N- to C-terminus: Putative membrane protein insertion efficiency factor (73 aa).

It belongs to the UPF0161 family.

Its subcellular location is the cell inner membrane. In terms of biological role, could be involved in insertion of integral membrane proteins into the membrane. The polypeptide is Putative membrane protein insertion efficiency factor (Rickettsia bellii (strain RML369-C)).